The sequence spans 210 residues: Probable high-affinity nitrate transporter-activating protein 2.2 (210 aa).

Positions 1 to 23 are cleaved as a signal peptide; sequence MARFGAVIHRVFLPLLLLLVVLG. The chain crosses the membrane as a helical span at residues 182 to 202; the sequence is IEVAAGVLSAFSVAALAVFLV.

This sequence belongs to the NAR2 family.

It is found in the cell membrane. Functionally, involved in nitrate transport. This Oryza sativa subsp. japonica (Rice) protein is Probable high-affinity nitrate transporter-activating protein 2.2 (NAR2.2).